A 213-amino-acid polypeptide reads, in one-letter code: Probable transaldolase (213 aa).

K83 acts as the Schiff-base intermediate with substrate in catalysis.

The protein belongs to the transaldolase family. Type 3B subfamily.

The protein resides in the cytoplasm. The catalysed reaction is D-sedoheptulose 7-phosphate + D-glyceraldehyde 3-phosphate = D-erythrose 4-phosphate + beta-D-fructose 6-phosphate. Its pathway is carbohydrate degradation; pentose phosphate pathway; D-glyceraldehyde 3-phosphate and beta-D-fructose 6-phosphate from D-ribose 5-phosphate and D-xylulose 5-phosphate (non-oxidative stage): step 2/3. Its function is as follows. Transaldolase is important for the balance of metabolites in the pentose-phosphate pathway. The sequence is that of Probable transaldolase from Oceanobacillus iheyensis (strain DSM 14371 / CIP 107618 / JCM 11309 / KCTC 3954 / HTE831).